Here is a 391-residue protein sequence, read N- to C-terminus: UPF0229 protein BCB4264_A0587 (391 aa).

Residues 1-16 (MGEENQPNYTISQENW) are compositionally biased toward polar residues. Disordered regions lie at residues 1 to 31 (MGEE…RHQE) and 80 to 117 (HVGQ…GDAA). The segment covering 21 to 31 (KGYDDQQRHQE) has biased composition (basic and acidic residues). A compositionally biased stretch (gly residues) spans 98 to 115 (GSGGQKQKGPGKGQGAGD).

The protein belongs to the UPF0229 family.

The protein is UPF0229 protein BCB4264_A0587 of Bacillus cereus (strain B4264).